We begin with the raw amino-acid sequence, 207 residues long: Small ribosomal subunit protein uS2 (207 aa).

It belongs to the universal ribosomal protein uS2 family.

This chain is Small ribosomal subunit protein uS2, found in Methanocella arvoryzae (strain DSM 22066 / NBRC 105507 / MRE50).